The chain runs to 215 residues: Probable phosphoglycerate mutase GpmB (215 aa).

Substrate contacts are provided by residues 8–15, 21–22, Arg-58, Lys-60, 82–85, 104–105, and 151–152; these read RHGETQWN, QG, ELDM, RR, and GI. Residue His-9 is the Tele-phosphohistidine intermediate of the active site. Glu-82 serves as the catalytic Proton donor/acceptor.

It belongs to the phosphoglycerate mutase family. GpmB subfamily.

It catalyses the reaction (2R)-2-phosphoglycerate = (2R)-3-phosphoglycerate. It participates in carbohydrate degradation; glycolysis; pyruvate from D-glyceraldehyde 3-phosphate: step 3/5. The chain is Probable phosphoglycerate mutase GpmB from Salmonella arizonae (strain ATCC BAA-731 / CDC346-86 / RSK2980).